Reading from the N-terminus, the 274-residue chain is Large ribosomal subunit protein uL2cz/uL2cy (274 aa).

The tract at residues 225 to 274 is disordered; sequence NPVDHPHGGGEGRAPIGRKKPTTPWGYPALGRRSRKRKKYSDSFILRRRK.

It belongs to the universal ribosomal protein uL2 family. Part of the 50S ribosomal subunit.

Its subcellular location is the plastid. The protein localises to the chloroplast. In Dioscorea elephantipes (Elephant's foot yam), this protein is Large ribosomal subunit protein uL2cz/uL2cy (rpl2-A).